The chain runs to 228 residues: Geranylgeranylglyceryl phosphate synthase (228 aa).

A sn-glycerol 1-phosphate-binding site is contributed by Lys-13. Residues Asp-15 and Thr-41 each coordinate Mg(2+). Residues 159 to 164 (YVEYSG), Gly-189, and 209 to 210 (GN) each bind sn-glycerol 1-phosphate.

This sequence belongs to the GGGP/HepGP synthase family. Group I subfamily. It depends on Mg(2+) as a cofactor.

It is found in the cytoplasm. It carries out the reaction sn-glycerol 1-phosphate + (2E,6E,10E)-geranylgeranyl diphosphate = sn-3-O-(geranylgeranyl)glycerol 1-phosphate + diphosphate. The protein operates within membrane lipid metabolism; glycerophospholipid metabolism. Prenyltransferase that catalyzes the transfer of the geranylgeranyl moiety of geranylgeranyl diphosphate (GGPP) to the C3 hydroxyl of sn-glycerol-1-phosphate (G1P). This reaction is the first ether-bond-formation step in the biosynthesis of archaeal membrane lipids. This chain is Geranylgeranylglyceryl phosphate synthase, found in Methanosphaerula palustris (strain ATCC BAA-1556 / DSM 19958 / E1-9c).